An 89-amino-acid chain; its full sequence is Large ribosomal subunit protein bL31B (89 aa).

The protein belongs to the bacterial ribosomal protein bL31 family. Type B subfamily. In terms of assembly, part of the 50S ribosomal subunit.

This is Large ribosomal subunit protein bL31B from Aeromonas salmonicida (strain A449).